Consider the following 250-residue polypeptide: Ribosomal RNA small subunit methyltransferase J (250 aa).

Residues 101–102 (RD), 117–118 (ER), 153–154 (SS), and aspartate 171 contribute to the S-adenosyl-L-methionine site.

The protein belongs to the methyltransferase superfamily. RsmJ family.

The protein localises to the cytoplasm. It catalyses the reaction guanosine(1516) in 16S rRNA + S-adenosyl-L-methionine = N(2)-methylguanosine(1516) in 16S rRNA + S-adenosyl-L-homocysteine + H(+). Its function is as follows. Specifically methylates the guanosine in position 1516 of 16S rRNA. The sequence is that of Ribosomal RNA small subunit methyltransferase J from Escherichia fergusonii (strain ATCC 35469 / DSM 13698 / CCUG 18766 / IAM 14443 / JCM 21226 / LMG 7866 / NBRC 102419 / NCTC 12128 / CDC 0568-73).